We begin with the raw amino-acid sequence, 1119 residues long: Nuclear matrix constituent protein 1 (1119 aa).

2 coiled-coil regions span residues 140-226 (LAEL…LYQQ) and 328-488 (LQNR…LDER). Disordered stretches follow at residues 846-884 (LDVE…AEEA), 903-974 (LASA…PTGR), 989-1015 (NGAL…EIPD), and 1046-1109 (GINA…EVSM). 2 stretches are compositionally biased toward basic residues: residues 859 to 876 (GNRK…RKRS) and 920 to 929 (KRTRNSRKRN). Positions 1075–1085 (TPEQSRGYQNQ) are enriched in polar residues.

This sequence belongs to the CRWN family.

It localises to the nucleus matrix. The protein resides in the nucleus lamina. In terms of biological role, architectural component of nuclear structure that plays different roles in controlling nuclear size and morphology. This is Nuclear matrix constituent protein 1 from Daucus carota subsp. sativus (Carrot).